We begin with the raw amino-acid sequence, 295 residues long: Protoheme IX farnesyltransferase (295 aa).

Helical transmembrane passes span 9 to 29 (ITKPGIIFGNVLSVAGGFFLA), 36 to 56 (FGVFLAAVIGTSLVVASGCVF), 80 to 100 (LVSLKLALLYATLLGIAGVAL), 108 to 128 (LAALFAVIGFVIYVGFYSLYL), 135 to 155 (GTLVGSLSGAMPPVIGYCAVS), 163 to 183 (LTLLVMFSLWQMPHSYAIAIF), 209 to 229 (ILLYILAFLVATLMLTVGGYA), 230 to 250 (GLNYLAVAAGMGMYWLYMAWK), and 265 to 285 (FVFSIFTITALSVMMSVDFQV).

This sequence belongs to the UbiA prenyltransferase family. Protoheme IX farnesyltransferase subfamily.

It is found in the cell inner membrane. The enzyme catalyses heme b + (2E,6E)-farnesyl diphosphate + H2O = Fe(II)-heme o + diphosphate. It functions in the pathway porphyrin-containing compound metabolism; heme O biosynthesis; heme O from protoheme: step 1/1. Converts heme B (protoheme IX) to heme O by substitution of the vinyl group on carbon 2 of heme B porphyrin ring with a hydroxyethyl farnesyl side group. This is Protoheme IX farnesyltransferase from Pseudomonas syringae pv. tomato (strain ATCC BAA-871 / DC3000).